The sequence spans 236 residues: Phosphoglycolate phosphatase (236 aa).

Asp-23 acts as the Nucleophile in catalysis. Residues Asp-23 and Asp-25 each contribute to the Mg(2+) site. Position 162 (Lys-162) interacts with substrate. Mg(2+) is bound by residues Asp-185 and Asp-189.

This sequence belongs to the archaeal SPP-like hydrolase family. Mg(2+) serves as cofactor.

The enzyme catalyses 2-phosphoglycolate + H2O = glycolate + phosphate. Catalyzes the dephosphorylation of 2-phosphoglycolate. This Picrophilus torridus (strain ATCC 700027 / DSM 9790 / JCM 10055 / NBRC 100828 / KAW 2/3) protein is Phosphoglycolate phosphatase.